The chain runs to 93 residues: Corticostatin 1 (93 aa).

Residues 1–19 (MRTLILLAAILLAALQAQA) form the signal peptide. Residues 20–59 (ELFSVNVDEVLDQQQPGSDQDLVIHLTGEESSALQVPDTK) constitute a propeptide that is removed on maturation. Disulfide bonds link Cys62–Cys90, Cys64–Cys79, and Cys69–Cys89.

Belongs to the alpha-defensin family.

The protein localises to the secreted. In terms of biological role, microbicidal activity and inhibits corticotropin (ACTH) stimulated corticosterone production. This Oryctolagus cuniculus (Rabbit) protein is Corticostatin 1.